A 414-amino-acid polypeptide reads, in one-letter code: CinA-like protein (414 aa).

Belongs to the CinA family.

This is CinA-like protein from Akkermansia muciniphila (strain ATCC BAA-835 / DSM 22959 / JCM 33894 / BCRC 81048 / CCUG 64013 / CIP 107961 / Muc).